The sequence spans 389 residues: Mating-type protein MAT-1 (389 aa).

Residues 70 to 127 (KAKKALNAFVGFRCYYISIPHFKSWPMKKLSNLIGLLWETDPNKSLWSLMTKAWSAIR) constitute a DNA-binding region (alpha box).

The protein belongs to the MATALPHA1 family.

The protein resides in the nucleus. Its function is as follows. Mating type proteins are sequence specific DNA-binding proteins that act as master switches in fungal differentiation by controlling gene expression in a cell type-specific fashion. Transcriptional activator that induces the transcription of alpha-specific genes. In Alternaria alternata (Alternaria rot fungus), this protein is Mating-type protein MAT-1 (MAT1).